We begin with the raw amino-acid sequence, 214 residues long: N-(5'-phosphoribosyl)anthranilate isomerase (214 aa).

This sequence belongs to the TrpF family.

The catalysed reaction is N-(5-phospho-beta-D-ribosyl)anthranilate = 1-(2-carboxyphenylamino)-1-deoxy-D-ribulose 5-phosphate. It functions in the pathway amino-acid biosynthesis; L-tryptophan biosynthesis; L-tryptophan from chorismate: step 3/5. In Haloarcula marismortui (strain ATCC 43049 / DSM 3752 / JCM 8966 / VKM B-1809) (Halobacterium marismortui), this protein is N-(5'-phosphoribosyl)anthranilate isomerase.